A 61-amino-acid polypeptide reads, in one-letter code: Putative antitoxin VapB21 (61 aa).

This sequence belongs to the UPF0165 family.

Its function is as follows. Possibly the antitoxin component of a type II toxin-antitoxin (TA) system. Its cognate toxin is VapC21 (Potential). The protein is Putative antitoxin VapB21 (vapB21) of Archaeoglobus fulgidus (strain ATCC 49558 / DSM 4304 / JCM 9628 / NBRC 100126 / VC-16).